A 152-amino-acid chain; its full sequence is MKYMTVTDLNNAGATVIGTIKGGEWFLGTPHKDILSKPGFYFLVSKLDGRPFSNPCVSARFYVGNQRSKQGFSAVLSHIRQRRSQLARTIANNNVPYTVFYLPASKMKPLTTGFGKGQLALAFTRNHHSEYQTLEEMNRMLADNFKFVLQAY.

Its function is as follows. Disorganizes the host nucleoid and inhibits replication, but without host DNA cleavage or degradation. Only the architecture of the nucleoid is affected. May act on the host chromosomal sequences that determine the structure of the nucleoid. Binds to dsDNA but not to ssDNA. The chain is Nucleoid disruption protein (ndd) from Enterobacteria phage K3 (Bacteriophage K3).